The sequence spans 50 residues: Fungus-induced-related protein 15 (50 aa).

An N-terminal signal peptide occupies residues 1 to 21; that stretch reads MNFYSLFVFIALIFSFNVVHG.

Functionally, may have role in hypoxia response. In Caenorhabditis elegans, this protein is Fungus-induced-related protein 15 (fipr-15).